Reading from the N-terminus, the 61-residue chain is Small ribosomal subunit protein bS21 (61 aa).

Residues E36–R61 form a disordered region. Residues V43–R61 show a composition bias toward basic residues.

This sequence belongs to the bacterial ribosomal protein bS21 family.

The polypeptide is Small ribosomal subunit protein bS21 (rpsU) (Caldanaerobacter subterraneus subsp. tengcongensis (strain DSM 15242 / JCM 11007 / NBRC 100824 / MB4) (Thermoanaerobacter tengcongensis)).